We begin with the raw amino-acid sequence, 744 residues long: Potassium-transporting ATPase ATP-binding subunit (744 aa).

4 consecutive transmembrane segments (helical) span residues proline 80–leucine 100, alanine 108–alanine 128, leucine 265–leucine 285, and valine 310–isoleucine 330. The active-site 4-aspartylphosphate intermediate is the aspartate 363. ATP-binding positions include aspartate 400, glutamate 404, phenylalanine 435–serine 442, and lysine 457. Mg(2+) contacts are provided by aspartate 580 and aspartate 584. The next 3 helical transmembrane spans lie at phenylalanine 650–methionine 670, alanine 678–leucine 698, and leucine 724–valine 744.

This sequence belongs to the cation transport ATPase (P-type) (TC 3.A.3) family. Type IA subfamily. The system is composed of three essential subunits: KdpA, KdpB and KdpC.

Its subcellular location is the cell inner membrane. It carries out the reaction K(+)(out) + ATP + H2O = K(+)(in) + ADP + phosphate + H(+). Part of the high-affinity ATP-driven potassium transport (or Kdp) system, which catalyzes the hydrolysis of ATP coupled with the electrogenic transport of potassium into the cytoplasm. This subunit is responsible for energy coupling to the transport system and for the release of the potassium ions to the cytoplasm. The chain is Potassium-transporting ATPase ATP-binding subunit from Ralstonia nicotianae (strain ATCC BAA-1114 / GMI1000) (Ralstonia solanacearum).